A 507-amino-acid polypeptide reads, in one-letter code: ATP synthase subunit alpha, chloroplastic (507 aa).

170–177 (GDRQTGKT) serves as a coordination point for ATP.

Belongs to the ATPase alpha/beta chains family. As to quaternary structure, F-type ATPases have 2 components, CF(1) - the catalytic core - and CF(0) - the membrane proton channel. CF(1) has five subunits: alpha(3), beta(3), gamma(1), delta(1), epsilon(1). CF(0) has four main subunits: a, b, b' and c.

It localises to the plastid. Its subcellular location is the chloroplast thylakoid membrane. It carries out the reaction ATP + H2O + 4 H(+)(in) = ADP + phosphate + 5 H(+)(out). In terms of biological role, produces ATP from ADP in the presence of a proton gradient across the membrane. The alpha chain is a regulatory subunit. This is ATP synthase subunit alpha, chloroplastic from Tetradesmus obliquus (Green alga).